The following is a 288-amino-acid chain: Hyaluronidase (288 aa).

N36 carries an N-linked (GlcNAc...) asparagine glycan. E66 functions as the Proton donor in the catalytic mechanism. C142 and C154 are joined by a disulfide. N282 carries an N-linked (GlcNAc...) asparagine glycan.

This sequence belongs to the glycosyl hydrolase 56 family. Expressed by the venom gland.

The protein localises to the secreted. It catalyses the reaction Random hydrolysis of (1-&gt;4)-linkages between N-acetyl-beta-D-glucosamine and D-glucuronate residues in hyaluronate.. Hydrolyzes high molecular weight hyaluronic acid to produce small oligosaccharides. The polypeptide is Hyaluronidase (Polybia paulista (Neotropical social wasp)).